A 151-amino-acid polypeptide reads, in one-letter code: Acidic phospholipase A2 1 (151 aa).

An N-terminal signal peptide occupies residues 1 to 21 (MNPAHLLVLSAVCVSLLGASS). The propeptide occupies 22–27 (IPPQPL). Disulfide bonds link Cys-38–Cys-104, Cys-54–Cys-151, Cys-56–Cys-72, Cys-71–Cys-132, Cys-78–Cys-125, Cys-88–Cys-118, and Cys-111–Cys-123. Residues Tyr-55, Gly-57, and Gly-59 each coordinate Ca(2+). His-75 is a catalytic residue. Asp-76 serves as a coordination point for Ca(2+). Residue Asp-126 is part of the active site.

The cofactor is Ca(2+). In terms of tissue distribution, expressed by the venom gland.

The protein resides in the secreted. The enzyme catalyses a 1,2-diacyl-sn-glycero-3-phosphocholine + H2O = a 1-acyl-sn-glycero-3-phosphocholine + a fatty acid + H(+). Its function is as follows. Snake venom phospholipase A2 (PLA2) that may exhibit cardiotoxicity, myotoxicity, antiplatelet activity, and edema-inducing activity. PLA2 catalyzes the calcium-dependent hydrolysis of the 2-acyl groups in 3-sn-phosphoglycerides. This chain is Acidic phospholipase A2 1, found in Ophiophagus hannah (King cobra).